The chain runs to 325 residues: Cyclic AMP-responsive element-binding protein 1 (325 aa).

2 stretches are compositionally biased toward polar residues: residues 1 to 11 and 18 to 27; these read MESGAENQQSG and AESQQMTVQA. Disordered regions lie at residues 1 to 27 and 92 to 111; these read MESG…TVQA and SEDS…RREI. Residues 85–144 form the KID domain; the sequence is QISTIAESEDSQESVDSVTDSQKRREILSRRPSYRKILNDLSSDAPGVPRIEEEKSEEET. Serine 117 carries the phosphoserine; by CaMK1, CaMK2, CaMK4, PKB/AKT1 or PKB/AKT2, RPS6KA3, RPS6KA4, RPS6KA5 and SGK1 modification. Residue lysine 120 forms a Glycyl lysine isopeptide (Lys-Gly) (interchain with G-Cter in SUMO2) linkage. Positions 124–146 are disordered; the sequence is DLSSDAPGVPRIEEEKSEEETSA. Serine 126 bears the Phosphoserine; by CaMK2 mark. A Phosphoserine; by HIPK2 modification is found at serine 255. The region spanning 267 to 325 is the bZIP domain; it reads ARKREVRLMKNREAARECRRKKKEYVKCLENRVAVLENQNKTLIEELKALKDLYCHKSD. The segment at 268–293 is basic motif; that stretch reads RKREVRLMKNREAARECRRKKKEYVK. Glycyl lysine isopeptide (Lys-Gly) (interchain with G-Cter in SUMO1) cross-links involve residues lysine 269 and lysine 288. The segment at 295–316 is leucine-zipper; that stretch reads LENRVAVLENQNKTLIEELKAL.

The protein belongs to the bZIP family. In terms of assembly, interacts with PPRC1. Binds DNA as a dimer. This dimer is stabilized by magnesium ions. Interacts, through the bZIP domain, with the coactivators CRTC1/TORC1, CRTC2/TORC2 and CRTC3/TORC3. When phosphorylated on Ser-117, binds CREBBP. Interacts with CREBL2; regulates CREB1 phosphorylation, stability and transcriptional activity. Interacts (phosphorylated form) with TOX3. Interacts with ARRB1. Binds to HIPK2. Interacts with SGK1. Interacts with TSSK4; this interaction facilitates phosphorylation on Ser-117. Forms a complex with KMT2A and CREBBP. Interacts with TOX4; CREB1 is required for full induction of TOX4-dependent activity and the interaction is increased by cAMP and inhibited by insulin. Post-translationally, sumoylated with SUMO1. Sumoylation on Lys-288, but not on Lys-269, is required for nuclear localization of this protein. Sumoylation is enhanced under hypoxia, promoting nuclear localization and stabilization. In terms of processing, stimulated by phosphorylation. Phosphorylation of both Ser-117 and Ser-126 in the SCN regulates the activity of CREB and participates in circadian rhythm generation. Phosphorylation of Ser-117 allows CREBBP binding. Phosphorylated upon calcium influx by CaMK4 and CaMK2 on Ser-117. CaMK4 is much more potent than CaMK2 in activating CREB. Phosphorylated by CaMK2 on Ser-126. Phosphorylation of Ser-126 blocks CREB-mediated transcription even when Ser-117 is phosphorylated. Phosphorylated by CaMK1. Phosphorylation of Ser-255 by HIPK2 in response to genotoxic stress promotes CREB1 activity, facilitating the recruitment of the coactivator CBP. Phosphorylated at Ser-117 by RPS6KA3, RPS6KA4 and RPS6KA5 in response to mitogenic or stress stimuli. CREBL2 positively regulates phosphorylation at Ser-117 thereby stimulating CREB1 transcriptional activity. In liver, phosphorylation is induced by fasting or glucagon in a circadian fashion. Phosphorylated by TSSK4 on Ser-117.

The protein resides in the nucleus. Its function is as follows. Phosphorylation-dependent transcription factor that stimulates transcription upon binding to the DNA cAMP response element (CRE), a sequence present in many viral and cellular promoters. Transcription activation is enhanced by the TORC coactivators which act independently of Ser-117 phosphorylation. Involved in different cellular processes including the synchronization of circadian rhythmicity and the differentiation of adipose cells. Regulates the expression of apoptotic and inflammatory response factors in cardiomyocytes in response to ERFE-mediated activation of AKT signaling. The polypeptide is Cyclic AMP-responsive element-binding protein 1 (CREB1) (Bos taurus (Bovine)).